Here is a 255-residue protein sequence, read N- to C-terminus: Thiazole synthase (255 aa).

The Schiff-base intermediate with DXP role is filled by Lys96. Residues Gly157, 183 to 184 (AG), and 205 to 206 (NT) contribute to the 1-deoxy-D-xylulose 5-phosphate site.

The protein belongs to the ThiG family. Homotetramer. Forms heterodimers with either ThiH or ThiS.

It is found in the cytoplasm. The enzyme catalyses [ThiS sulfur-carrier protein]-C-terminal-Gly-aminoethanethioate + 2-iminoacetate + 1-deoxy-D-xylulose 5-phosphate = [ThiS sulfur-carrier protein]-C-terminal Gly-Gly + 2-[(2R,5Z)-2-carboxy-4-methylthiazol-5(2H)-ylidene]ethyl phosphate + 2 H2O + H(+). The protein operates within cofactor biosynthesis; thiamine diphosphate biosynthesis. Functionally, catalyzes the rearrangement of 1-deoxy-D-xylulose 5-phosphate (DXP) to produce the thiazole phosphate moiety of thiamine. Sulfur is provided by the thiocarboxylate moiety of the carrier protein ThiS. In vitro, sulfur can be provided by H(2)S. The protein is Thiazole synthase of Bacillus licheniformis (strain ATCC 14580 / DSM 13 / JCM 2505 / CCUG 7422 / NBRC 12200 / NCIMB 9375 / NCTC 10341 / NRRL NRS-1264 / Gibson 46).